Here is a 366-residue protein sequence, read N- to C-terminus: Adenine DNA glycosylase (366 aa).

A DNA-binding site is contributed by 30–31 (WR). E43 acts as the Proton donor/acceptor in catalysis. Residues 48–49 (QT), 86–88 (LGY), Y126, and E188 each bind DNA. Residues 105 to 133 (RYGGKVPDDPDEFSRLKGVGPYTVGAVLS) enclose the HhH domain. The [4Fe-4S] cluster site is built by C198, C205, C208, and C214. S308 contributes to the DNA binding site.

It belongs to the Nth/MutY family. It depends on [4Fe-4S] cluster as a cofactor.

It carries out the reaction Hydrolyzes free adenine bases from 7,8-dihydro-8-oxoguanine:adenine mismatched double-stranded DNA, leaving an apurinic site.. Base excision repair (BER) glycosylase that initiates repair of A:oxoG to C:G by removing the inappropriately paired adenine base from the DNA backbone, generating an abasic site product. 8-oxoguanine (oxoG) is a genotoxic DNA lesion resulting from oxidation of guanine; this residue is misread by replicative DNA polymerases, that insert adenine instead of cytosine opposite the oxidized damaged base. Shows a powerful dicrimination of A versus C, since it does not cleave cytosine in oxoG:C pairs. May also be able to remove adenine from A:G mispairs, although this activity may not be physiologically relevant. This chain is Adenine DNA glycosylase, found in Geobacillus stearothermophilus (Bacillus stearothermophilus).